The sequence spans 374 residues: Ribosomal RNA large subunit methyltransferase M (374 aa).

S-adenosyl-L-methionine contacts are provided by residues Ser188, 221–224 (CPGG), Asp240, Asp260, and Asp276. Lys305 (proton acceptor) is an active-site residue.

Belongs to the class I-like SAM-binding methyltransferase superfamily. RNA methyltransferase RlmE family. RlmM subfamily. Monomer.

It localises to the cytoplasm. It carries out the reaction cytidine(2498) in 23S rRNA + S-adenosyl-L-methionine = 2'-O-methylcytidine(2498) in 23S rRNA + S-adenosyl-L-homocysteine + H(+). Functionally, catalyzes the 2'-O-methylation at nucleotide C2498 in 23S rRNA. This chain is Ribosomal RNA large subunit methyltransferase M, found in Edwardsiella ictaluri (strain 93-146).